We begin with the raw amino-acid sequence, 325 residues long: Acetyl-coenzyme A carboxylase carboxyl transferase subunit alpha (325 aa).

A CoA carboxyltransferase C-terminal domain is found at 38–292; that stretch reads KLEKRLHALE…DQVLEKSLKQ (255 aa).

This sequence belongs to the AccA family. Acetyl-CoA carboxylase is a heterohexamer composed of biotin carboxyl carrier protein (AccB), biotin carboxylase (AccC) and two subunits each of ACCase subunit alpha (AccA) and ACCase subunit beta (AccD).

It localises to the cytoplasm. It catalyses the reaction N(6)-carboxybiotinyl-L-lysyl-[protein] + acetyl-CoA = N(6)-biotinyl-L-lysyl-[protein] + malonyl-CoA. It functions in the pathway lipid metabolism; malonyl-CoA biosynthesis; malonyl-CoA from acetyl-CoA: step 1/1. Its function is as follows. Component of the acetyl coenzyme A carboxylase (ACC) complex. First, biotin carboxylase catalyzes the carboxylation of biotin on its carrier protein (BCCP) and then the CO(2) group is transferred by the carboxyltransferase to acetyl-CoA to form malonyl-CoA. In Halalkalibacterium halodurans (strain ATCC BAA-125 / DSM 18197 / FERM 7344 / JCM 9153 / C-125) (Bacillus halodurans), this protein is Acetyl-coenzyme A carboxylase carboxyl transferase subunit alpha.